Here is a 521-residue protein sequence, read N- to C-terminus: Na(+)/H(+) antiporter ApNhaP (521 aa).

At 1-18 (MTIEAAMGEEAIKENLEQ) the chain is on the periplasmic side. The helical transmembrane segment at 19–39 (FLIVLSVSLGVATLSQISSFF) threads the bilayer. The Cytoplasmic portion of the chain corresponds to 40–41 (RQ). The helical transmembrane segment at 42-62 (IPYTLLLVIVGLGLAFVDIRL) threads the bilayer. Residues 63 to 94 (VNLSPELILEIFLPPLLFEAAWNIRWRNLKKN) lie on the Periplasmic side of the membrane. Residues 95 to 115 (LFPVVLLAIIGVVISVVGIGF) traverse the membrane as a helical segment. The Cytoplasmic portion of the chain corresponds to 116 to 126 (SLNYFSGLSLP). A helical membrane pass occupies residues 127–147 (IALLVGAILAATDPVSVIALF). Topologically, residues 148–164 (RELGVGERLTVLMEGES) are periplasmic. A helical membrane pass occupies residues 165–185 (LFNDGVAVVAFSLLVGIPLGT). At 186-194 (QEFSVTNTL) the chain is on the cytoplasmic side. Residues 195-215 (IQFVTLQGIGIGCGGVIGFGI) traverse the membrane as a helical segment. Residues 216-245 (SYLTQRFDLPLVEQSLTLVSAYGTYLITEE) are Periplasmic-facing. Residues 246 to 266 (LGGSGVIGVVTVGLILGNFGS) traverse the membrane as a helical segment. Topologically, residues 267–276 (RIGMNPRTRL) are cytoplasmic. The chain crosses the membrane as a helical span at residues 277-297 (LVSEFWEFIAFFVNSIVFLLI). The Periplasmic portion of the chain corresponds to 298–311 (GDQINIRGLADNGQ). A helical membrane pass occupies residues 312 to 332 (LILITIIALVIIRAISIYGLG). Residues 333-349 (TISNLITKQDISWQEET) are Cytoplasmic-facing. Residues 350 to 370 (VLWWGGLRGSVSIALALSVPV) form a helical membrane-spanning segment. The Periplasmic portion of the chain corresponds to 371–380 (MLDGRQDIIE). The chain crosses the membrane as a helical span at residues 381–401 (AVFGVVLFTLLVQGLTMQTVI). The Cytoplasmic portion of the chain corresponds to 402-521 (EKLGLIGDRA…LLQEVLAKPE (120 aa)).

The protein belongs to the monovalent cation:proton antiporter 1 (CPA1) transporter (TC 2.A.36) family.

It is found in the cell inner membrane. In terms of biological role, na(+)/H(+) antiporter that extrudes sodium in exchange for external protons. Also shows high Ca(2+)/H(+) antiporter activity at alkaline pH. Does not catalyze exchange between Li(+) and H(+). This chain is Na(+)/H(+) antiporter ApNhaP (apnhaP), found in Aphanothece halophytica.